The following is a 184-amino-acid chain: Lactoylglutathione lyase (184 aa).

Residue A2 is modified to N-acetylalanine. C19 and C20 are oxidised to a cystine. A VOC domain is found at 31-177; sequence LLQQTMLRIK…DGYWIEILNP (147 aa). Substrate-binding residues include Q34 and R38. Q34 provides a ligand contact to Zn(2+). Residue E100 coordinates Zn(2+). Position 104 (N104) interacts with substrate. T107 is modified (phosphothreonine). Residues R123 and H127 each coordinate substrate. H127 lines the Zn(2+) pocket. S-glutathionyl cysteine is present on C139. K148 carries the post-translational modification N6-acetyllysine; alternate. K148 is subject to N6-succinyllysine; alternate. 157–158 is a binding site for substrate; that stretch reads KM. Residue E173 participates in Zn(2+) binding. The active-site Proton donor/acceptor is the E173.

Belongs to the glyoxalase I family. As to quaternary structure, homodimer. Requires Zn(2+) as cofactor. Post-translationally, glutathionylation at Cys-139 inhibits enzyme activity. Phosphorylated at Thr-107 in the presence of CaMK2. However, this is a consensus site for phosphorylation by CK2 so phosphorylation may be mediated by CK2 rather than CaMK2. Phosphorylation is induced by TNF and suppresses the TNF-induced transcriptional activity of NF-kappa-B. In terms of processing, exists in a nitric oxide (NO)-modified form. The exact nature of the modification is unknown, but it suppresses the TNF-induced transcriptional activity of NF-kappa-B.

The enzyme catalyses (R)-S-lactoylglutathione = methylglyoxal + glutathione. Its pathway is secondary metabolite metabolism; methylglyoxal degradation; (R)-lactate from methylglyoxal: step 1/2. In terms of biological role, catalyzes the conversion of hemimercaptal, formed from methylglyoxal and glutathione, to S-lactoylglutathione. Involved in the regulation of TNF-induced transcriptional activity of NF-kappa-B. Required for normal osteoclastogenesis. The polypeptide is Lactoylglutathione lyase (Glo1) (Rattus norvegicus (Rat)).